The sequence spans 488 residues: Probable malate:quinone oxidoreductase (488 aa).

Belongs to the MQO family. FAD is required as a cofactor.

It carries out the reaction (S)-malate + a quinone = a quinol + oxaloacetate. Its pathway is carbohydrate metabolism; tricarboxylic acid cycle; oxaloacetate from (S)-malate (quinone route): step 1/1. The sequence is that of Probable malate:quinone oxidoreductase from Neisseria meningitidis serogroup B (strain ATCC BAA-335 / MC58).